The primary structure comprises 111 residues: MNNWQEELFLKIIKREEPATILYEDDKVIAFLDKYAHTKGHFLVVPKNYSRNLFSISDEDLSYLIVKAREFALQEIKKLGATGFKLLINNEPDAEQSIFHTHVHIIPYYKK.

The 104-residue stretch at 8-111 folds into the HIT domain; it reads LFLKIIKREE…HVHIIPYYKK (104 aa). A Histidine triad motif motif is present at residues 100–104; sequence HTHVH.

This is an uncharacterized protein from Mesomycoplasma hyorhinis (Mycoplasma hyorhinis).